A 183-amino-acid polypeptide reads, in one-letter code: ATP synthase subunit delta (183 aa).

Belongs to the ATPase delta chain family. In terms of assembly, F-type ATPases have 2 components, F(1) - the catalytic core - and F(0) - the membrane proton channel. F(1) has five subunits: alpha(3), beta(3), gamma(1), delta(1), epsilon(1). CF(0) has four main subunits: a(1), b(1), b'(1) and c(10-14). The alpha and beta chains form an alternating ring which encloses part of the gamma chain. F(1) is attached to F(0) by a central stalk formed by the gamma and epsilon chains, while a peripheral stalk is formed by the delta, b and b' chains.

It localises to the cellular thylakoid membrane. F(1)F(0) ATP synthase produces ATP from ADP in the presence of a proton or sodium gradient. F-type ATPases consist of two structural domains, F(1) containing the extramembraneous catalytic core and F(0) containing the membrane proton channel, linked together by a central stalk and a peripheral stalk. During catalysis, ATP synthesis in the catalytic domain of F(1) is coupled via a rotary mechanism of the central stalk subunits to proton translocation. Its function is as follows. This protein is part of the stalk that links CF(0) to CF(1). It either transmits conformational changes from CF(0) to CF(1) or is implicated in proton conduction. This Trichormus variabilis (strain ATCC 29413 / PCC 7937) (Anabaena variabilis) protein is ATP synthase subunit delta.